Here is a 427-residue protein sequence, read N- to C-terminus: MESLTLQPIARVDGAINLPGSKSVSNRALLLAALACGKTALTNLLDSDDVRHMLNALSALGINYTLSADRTRCDITGNGGALRAPGALELFLGNAGTAMRPLAAALCLGQNEIVLTGEPRMKERPIGHLVDSLRQGGANIDYLEQENYPPLRLRGGFTGGDIEVDGSVSSQFLTALLMTAPLAPKDTIIRVKGELVSKPYIDITLNLMKTFGVEIANHHYQQFVVKGGQQYHSPGRYLVEGDASSASYFLAAGAIKGGTVKVTGIGRKSMQGDIRFADVLEKMGATITWGDDFIACTRGELHAIDMDMNHIPDAAMTIATTALFAKGTTTLRNIYNWRVKETDRLFAMATELRKVGAEVEEGHDYIRITPPAKLQHADIGTYNDHRMAMCFSLVALSDTPVTILDPKCTAKTFPDYFEQLARMSTPA.

Residues Lys22, Ser23, and Arg27 each contribute to the 3-phosphoshikimate site. Lys22 serves as a coordination point for phosphoenolpyruvate. Phosphoenolpyruvate contacts are provided by Gly96 and Arg124. The 3-phosphoshikimate site is built by Ser169, Ser170, Gln171, Ser197, Asp313, Asn336, and Lys340. A phosphoenolpyruvate-binding site is contributed by Gln171. Asp313 serves as the catalytic Proton acceptor. 3 residues coordinate phosphoenolpyruvate: Arg344, Arg386, and Lys411.

It belongs to the EPSP synthase family. In terms of assembly, monomer.

It is found in the cytoplasm. It carries out the reaction 3-phosphoshikimate + phosphoenolpyruvate = 5-O-(1-carboxyvinyl)-3-phosphoshikimate + phosphate. It functions in the pathway metabolic intermediate biosynthesis; chorismate biosynthesis; chorismate from D-erythrose 4-phosphate and phosphoenolpyruvate: step 6/7. Its function is as follows. Catalyzes the transfer of the enolpyruvyl moiety of phosphoenolpyruvate (PEP) to the 5-hydroxyl of shikimate-3-phosphate (S3P) to produce enolpyruvyl shikimate-3-phosphate and inorganic phosphate. This is 3-phosphoshikimate 1-carboxyvinyltransferase from Salmonella typhimurium (strain LT2 / SGSC1412 / ATCC 700720).